We begin with the raw amino-acid sequence, 426 residues long: MKTLGFSPKQKFCARRQTQRWLPEGDRSSSFTPSTMETQRKKFTKVSVNSELLPVDLIMEILKKLSLKPLIRFLCVSKLWASIIRDPYFMKLFLNESLKRPKSLVFVFRAQSLGSIFSSVHLKSTREISSSSSSSSASSITYHVTCYTQQRMTISPSVHGLICYGPPSSLVIYNPCTRRSITLPKIKAGRRAINQYIGYDPLDGNYKVVCITRGMPMLRNRRGLAEEIQVLTLGTRDSSWRMIHDIIPPHSPVSEELCINGVLYYRAFIGTKLNESAIMSFDVRSEKFDLIKVPCNFRSFSKLAKYEGKLAVIFYEKKTSGIIGLWILEDASNGEWSKKTFALPNLAASSTNSRILKLQKFRTTDADTCEIIFTPSYAHSSLSSAIYCDLKENKVRKFVKEGWTENYLPCNADSVSSTQVENLMFL.

Positions 47–92 (SVNSELLPVDLIMEILKKLSLKPLIRFLCVSKLWASIIRDPYFMKL) constitute an F-box domain.

The polypeptide is Putative F-box protein At4g38870 (Arabidopsis thaliana (Mouse-ear cress)).